A 117-amino-acid chain; its full sequence is Immunoglobulin heavy variable 1-46 (117 aa).

Residues 1 to 19 (MDWTWRVFCLLAVAPGAHS) form the signal peptide. A framework-1 region spans residues 20–44 (QVQLVQSGAEVKKPGASVKVSCKAS). One can recognise an Ig-like domain in the interval 20–117 (QVQLVQSGAE…EDTAVYYCAR (98 aa)). C41 and C115 form a disulfide bridge. The tract at residues 45 to 52 (GYTFTSYY) is complementarity-determining-1. Positions 53-69 (MHWVRQAPGQGLEWMGI) are framework-2. The interval 70–77 (INPSGGST) is complementarity-determining-2. Positions 78 to 115 (SYAQKFQGRVTMTRDTSTSTVYMELSSLRSEDTAVYYC) are framework-3. The segment at 116 to 117 (AR) is complementarity-determining-3.

As to quaternary structure, immunoglobulins are composed of two identical heavy chains and two identical light chains; disulfide-linked.

It is found in the secreted. Its subcellular location is the cell membrane. In terms of biological role, v region of the variable domain of immunoglobulin heavy chains that participates in the antigen recognition. Immunoglobulins, also known as antibodies, are membrane-bound or secreted glycoproteins produced by B lymphocytes. In the recognition phase of humoral immunity, the membrane-bound immunoglobulins serve as receptors which, upon binding of a specific antigen, trigger the clonal expansion and differentiation of B lymphocytes into immunoglobulins-secreting plasma cells. Secreted immunoglobulins mediate the effector phase of humoral immunity, which results in the elimination of bound antigens. The antigen binding site is formed by the variable domain of one heavy chain, together with that of its associated light chain. Thus, each immunoglobulin has two antigen binding sites with remarkable affinity for a particular antigen. The variable domains are assembled by a process called V-(D)-J rearrangement and can then be subjected to somatic hypermutations which, after exposure to antigen and selection, allow affinity maturation for a particular antigen. This Homo sapiens (Human) protein is Immunoglobulin heavy variable 1-46.